A 380-amino-acid chain; its full sequence is Cytochrome b (380 aa).

4 helical membrane passes run Phe-34 to Met-54, Trp-78 to Ile-99, Trp-114 to Leu-134, and Phe-179 to Leu-199. Heme b-binding residues include His-84 and His-98. His-183 is a heme b binding site. His-202 provides a ligand contact to a ubiquinone. 4 helical membrane-spanning segments follow: residues Tyr-227–Ala-247, Leu-289–His-309, Ile-321–Gly-341, and Phe-348–Pro-368.

This sequence belongs to the cytochrome b family. The cytochrome bc1 complex contains 3 respiratory subunits (MT-CYB, CYC1 and UQCRFS1), 2 core proteins (UQCRC1 and UQCRC2) and probably 6 low-molecular weight proteins. Heme b is required as a cofactor.

Its subcellular location is the mitochondrion inner membrane. Functionally, component of the ubiquinol-cytochrome c reductase complex (complex III or cytochrome b-c1 complex) that is part of the mitochondrial respiratory chain. The b-c1 complex mediates electron transfer from ubiquinol to cytochrome c. Contributes to the generation of a proton gradient across the mitochondrial membrane that is then used for ATP synthesis. This Pelophylax plancyi (Korean pond frog) protein is Cytochrome b (mt-cyb).